The primary structure comprises 306 residues: Mycothiol acetyltransferase (306 aa).

N-acetyltransferase domains follow at residues valine 5 to proline 162 and valine 155 to serine 306. Acetyl-CoA contacts are provided by residues leucine 82 to valine 84 and arginine 90 to threonine 95. 1D-myo-inositol 2-(L-cysteinylamino)-2-deoxy-alpha-D-glucopyranoside is bound by residues glutamate 182, lysine 222, and glutamate 238. Acetyl-CoA-binding positions include valine 242–valine 244 and glutamine 249–lysine 255. Tyrosine 276 provides a ligand contact to 1D-myo-inositol 2-(L-cysteinylamino)-2-deoxy-alpha-D-glucopyranoside.

Belongs to the acetyltransferase family. MshD subfamily. As to quaternary structure, monomer.

The catalysed reaction is 1D-myo-inositol 2-(L-cysteinylamino)-2-deoxy-alpha-D-glucopyranoside + acetyl-CoA = mycothiol + CoA + H(+). Catalyzes the transfer of acetyl from acetyl-CoA to desacetylmycothiol (Cys-GlcN-Ins) to form mycothiol. This Saccharomonospora viridis (strain ATCC 15386 / DSM 43017 / JCM 3036 / CCUG 5913 / NBRC 12207 / NCIMB 9602 / P101) (Thermoactinomyces viridis) protein is Mycothiol acetyltransferase.